The sequence spans 227 residues: Cytochrome c oxidase subunit 2 (227 aa).

Residues methionine 1–serine 14 are Mitochondrial intermembrane-facing. Residues proline 15 to methionine 45 traverse the membrane as a helical segment. Topologically, residues leucine 46–glutamine 59 are mitochondrial matrix. A helical transmembrane segment spans residues glutamate 60–methionine 87. Residues aspartate 88–threonine 227 lie on the Mitochondrial intermembrane side of the membrane. Histidine 161, cysteine 196, glutamate 198, cysteine 200, histidine 204, and methionine 207 together coordinate Cu cation. Glutamate 198 provides a ligand contact to Mg(2+).

This sequence belongs to the cytochrome c oxidase subunit 2 family. As to quaternary structure, component of the cytochrome c oxidase (complex IV, CIV), a multisubunit enzyme composed of 14 subunits. The complex is composed of a catalytic core of 3 subunits MT-CO1, MT-CO2 and MT-CO3, encoded in the mitochondrial DNA, and 11 supernumerary subunits COX4I, COX5A, COX5B, COX6A, COX6B, COX6C, COX7A, COX7B, COX7C, COX8 and NDUFA4, which are encoded in the nuclear genome. The complex exists as a monomer or a dimer and forms supercomplexes (SCs) in the inner mitochondrial membrane with NADH-ubiquinone oxidoreductase (complex I, CI) and ubiquinol-cytochrome c oxidoreductase (cytochrome b-c1 complex, complex III, CIII), resulting in different assemblies (supercomplex SCI(1)III(2)IV(1) and megacomplex MCI(2)III(2)IV(2)). Found in a complex with TMEM177, COA6, COX18, COX20, SCO1 and SCO2. Interacts with TMEM177 in a COX20-dependent manner. Interacts with COX20. Interacts with COX16. The cofactor is Cu cation.

It localises to the mitochondrion inner membrane. It carries out the reaction 4 Fe(II)-[cytochrome c] + O2 + 8 H(+)(in) = 4 Fe(III)-[cytochrome c] + 2 H2O + 4 H(+)(out). Functionally, component of the cytochrome c oxidase, the last enzyme in the mitochondrial electron transport chain which drives oxidative phosphorylation. The respiratory chain contains 3 multisubunit complexes succinate dehydrogenase (complex II, CII), ubiquinol-cytochrome c oxidoreductase (cytochrome b-c1 complex, complex III, CIII) and cytochrome c oxidase (complex IV, CIV), that cooperate to transfer electrons derived from NADH and succinate to molecular oxygen, creating an electrochemical gradient over the inner membrane that drives transmembrane transport and the ATP synthase. Cytochrome c oxidase is the component of the respiratory chain that catalyzes the reduction of oxygen to water. Electrons originating from reduced cytochrome c in the intermembrane space (IMS) are transferred via the dinuclear copper A center (CU(A)) of subunit 2 and heme A of subunit 1 to the active site in subunit 1, a binuclear center (BNC) formed by heme A3 and copper B (CU(B)). The BNC reduces molecular oxygen to 2 water molecules using 4 electrons from cytochrome c in the IMS and 4 protons from the mitochondrial matrix. This Taterillus emini (Emin's gerbil) protein is Cytochrome c oxidase subunit 2 (MT-CO2).